An 845-amino-acid chain; its full sequence is Nuclear pore complex protein Nup107 (845 aa).

Disordered regions lie at residues 1–26 (MADS…MPPQ) and 677–702 (QNRP…MASE). Composition is skewed to polar residues over residues 7 to 26 (PRSS…MPPQ) and 685 to 694 (TSHAASSQDN).

The protein belongs to the nucleoporin Nup84/Nup107 family. Part of the nuclear pore complex (NPC). In terms of tissue distribution, expressed in spermatocytes (at protein level).

It is found in the nucleus. The protein localises to the nuclear pore complex. Its subcellular location is the nucleus envelope. The protein resides in the nucleus membrane. It localises to the cytoplasm. It is found in the cytoskeleton. The protein localises to the spindle. Its subcellular location is the chromosome. The protein resides in the nucleus matrix. Its function is as follows. Plays a role in nuclear pore complex (NPC) assembly and maintenance. Required for nuclear import of Mad. Mediates the association between the nuclear pore complex and a subset of active chromatin regions adjacent to lamin-associated domains. Plays a role in double strand break repair by relocalizing the heterochromatic double strand breaks (DSBs) to the nuclear periphery as part of the homologous recombination (HR) repair process. Regulates cytokinesis during spermatocyte meiosis by maintaining type-B lamin Lam localization to the spindle envelope. Regulates female gonad development and oogenesis. The protein is Nuclear pore complex protein Nup107 of Drosophila melanogaster (Fruit fly).